The chain runs to 291 residues: tRNA U34 carboxymethyltransferase (291 aa).

Residues lysine 61, tryptophan 75, lysine 80, glycine 100, 122 to 124, 149 to 150, tyrosine 169, and arginine 284 contribute to the carboxy-S-adenosyl-L-methionine site; these read DPS and VE.

This sequence belongs to the class I-like SAM-binding methyltransferase superfamily. CmoB family. Homotetramer.

It carries out the reaction carboxy-S-adenosyl-L-methionine + 5-hydroxyuridine(34) in tRNA = 5-carboxymethoxyuridine(34) in tRNA + S-adenosyl-L-homocysteine + H(+). Its function is as follows. Catalyzes carboxymethyl transfer from carboxy-S-adenosyl-L-methionine (Cx-SAM) to 5-hydroxyuridine (ho5U) to form 5-carboxymethoxyuridine (cmo5U) at position 34 in tRNAs. This is tRNA U34 carboxymethyltransferase from Campylobacter jejuni subsp. doylei (strain ATCC BAA-1458 / RM4099 / 269.97).